Consider the following 1216-residue polypeptide: Apical endosomal glycoprotein (1216 aa).

The signal sequence occupies residues 1–22; sequence MPLSSHLLPALVLFLAGSSGWA. Topologically, residues 23–1151 are extracellular; the sequence is WVPNHCRSPG…SPGNTAAPGS (1129 aa). The 28-residue stretch at 26 to 53 folds into the LDL-receptor class A 1; truncated domain; that stretch reads NHCRSPGQAVCNFVCDCRDCSDEAQCGY. Positions 64–222 constitute an MAM 1 domain; sequence FACDFEQDPC…DDLEFWDCGL (159 aa). N-linked (GlcNAc...) asparagine glycosylation occurs at Asn-203. The region spanning 228 to 266 is the LDL-receptor class A 2 domain; it reads NCPPGHHHCQNKVCVEPQQLCDGEDNCGDLSDENPLTCG. Intrachain disulfides connect Cys-229–Cys-241, Cys-236–Cys-254, and Cys-248–Cys-265. In terms of domain architecture, MAM 2 spans 269–425; the sequence is IATDFETGLG…DLILSDHCRP (157 aa). The interval 280 to 307 is disordered; it reads WNRSEGWSRNHRAGGPERPSWPRRDHSR. 2 N-linked (GlcNAc...) asparagine glycosylation sites follow: Asn-281 and Asn-339. The disordered stretch occupies residues 429–455; it reads VSTLQPLPPGPRAPAPQPLPPSSRLQD. Pro residues predominate over residues 434-449; the sequence is PLPPGPRAPAPQPLPP. In terms of domain architecture, LDL-receptor class A 3 spans 456-491; it reads SCKQGHLACGDLCVPPEQLCDFEEQCAGGEDEQACG. Cystine bridges form between Cys-457–Cys-468, Cys-464–Cys-481, and Cys-475–Cys-490. MAM domains are found at residues 491–644, 654–809, 811–969, and 971–1138; these read GTTD…DCSP, VSCN…PCWA, NYCS…PCPQ, and GSCD…HCQQ. N-linked (GlcNAc...) asparagine glycans are attached at residues Asn-583 and Asn-636. A glycan (N-linked (GlcNAc...) asparagine) is linked at Asn-835. A helical transmembrane segment spans residues 1152–1172; the sequence is VPAVVGSALLLLMLLVLLGLG. At 1173 to 1216 the chain is on the cytoplasmic side; it reads GRRWLQKKGSCPFQSNTEATAPGFDNILFNADGVTLPASVTSDP.

The protein resides in the membrane. Probably involved in the sorting and selective transport of receptors and ligands across polarized epithelia. The chain is Apical endosomal glycoprotein from Homo sapiens (Human).